Reading from the N-terminus, the 352-residue chain is Transcriptional regulatory protein AlgP (352 aa).

The disordered stretch occupies residues 128 to 352 (KALESRKAKP…SNGAAPTSAS (225 aa)). A compositionally biased stretch (low complexity) spans 138-341 (ATKPAAKAAA…SSAASATPAA (204 aa)).

In terms of biological role, the promoter for a critical alginate biosynthetic gene, AlgD, encoding GDP-mannose dehydrogenase, is activated only under conditions reminiscent of the cystic fibrosis lung (i.e. under high osmolarity), and at least two regulatory genes, AlgP and AlgQ, have been implicated in this activation process. This is Transcriptional regulatory protein AlgP (algP) from Pseudomonas aeruginosa (strain ATCC 15692 / DSM 22644 / CIP 104116 / JCM 14847 / LMG 12228 / 1C / PRS 101 / PAO1).